Here is a 66-residue protein sequence, read N- to C-terminus: Large ribosomal subunit protein bL28 (66 aa).

The protein belongs to the bacterial ribosomal protein bL28 family.

The polypeptide is Large ribosomal subunit protein bL28 (Oenococcus oeni (strain ATCC BAA-331 / PSU-1)).